The following is a 515-amino-acid chain: Leucine-rich repeat transmembrane neuronal protein 2 (515 aa).

The N-terminal stretch at 1-33 is a signal peptide; the sequence is MGLHFKWPLGAPMLAAIYAMSVVLKMLPALGMA. The Extracellular segment spans residues 34–421; that stretch reads CPPKCRCEKL…EPDNAIFTQR (388 aa). N-linked (GlcNAc...) asparagine glycosylation occurs at asparagine 57. 10 LRR repeats span residues 61–83, 84–107, 109–131, 132–155, 156–179, 181–203, 205–227, 229–251, 252–275, and 276–299; these read KGSL…QFAS, FSQL…AFQG, YKLK…TFTQ, LINL…LFYG, LRKL…LFWD, RSLE…GFAG, IKLR…HFLR, SSLH…MEWT, WSTL…VFET, and MPNL…ILSS. N-linked (GlcNAc...) asparagine glycosylation occurs at asparagine 126. Asparagine 243 carries N-linked (GlcNAc...) asparagine glycosylation. Asparagine 362 carries N-linked (GlcNAc...) asparagine glycosylation. Residues 422-442 traverse the membrane as a helical segment; sequence VITGTMALLFSFFFIIFIVFI. At 443-515 the chain is on the cytoplasmic side; that stretch reads SRKCCPPTLR…QQLPYKECEV (73 aa). The Involved in DLG4-binding signature appears at 512-515; sequence ECEV.

Belongs to the LRRTM family. In terms of assembly, interacts with DLG4. Interacts with neurexin NRXN1; interaction is mediated by heparan sulfate glycan modification on neurexin. As to expression, expressed in neuronal tissues. Widely distributed in neuropil regions in discrete puncta throughout the brain (at protein level). Detected in cortex, thalamus, striatum, olfactory bulb, cerebellum and all hippocampal subfields (at protein level). More abundant in deep than in superficial layers of neocortex (at protein level).

It localises to the cell membrane. It is found in the postsynaptic cell membrane. Its function is as follows. Involved in the development and maintenance of excitatory synapses in the nervous system. Regulates surface expression of AMPA receptors and instructs the development of functional glutamate release sites. Acts as a ligand for the presynaptic receptors NRXN1-A and NRXN1-B. This is Leucine-rich repeat transmembrane neuronal protein 2 (Lrrtm2) from Rattus norvegicus (Rat).